We begin with the raw amino-acid sequence, 325 residues long: D-alanine--D-alanine ligase (325 aa).

In terms of domain architecture, ATP-grasp spans 121 to 316 (KYVFEGCGLP…FEELVVRILR (196 aa)). 147-202 (VAALGTPLSVKPAHEGSSIGIRKVNSAAELAEAYEAAARLDDLVLVEQWIEGPEFT) provides a ligand contact to ATP. Residues aspartate 270, glutamate 283, and asparagine 285 each contribute to the Mg(2+) site.

Belongs to the D-alanine--D-alanine ligase family. Mg(2+) serves as cofactor. Requires Mn(2+) as cofactor.

The protein resides in the cytoplasm. It carries out the reaction 2 D-alanine + ATP = D-alanyl-D-alanine + ADP + phosphate + H(+). It participates in cell wall biogenesis; peptidoglycan biosynthesis. Cell wall formation. This Marinobacter nauticus (strain ATCC 700491 / DSM 11845 / VT8) (Marinobacter aquaeolei) protein is D-alanine--D-alanine ligase.